A 1137-amino-acid chain; its full sequence is Otoancorin (1137 aa).

Residues 1–23 form the signal peptide; it reads MSQGPRTCSLLLVLLLSHGGAYQ. Residues Asn-156, Asn-211, Asn-244, Asn-289, Asn-321, Asn-380, Asn-384, Asn-530, Asn-594, Asn-740, and Asn-798 are each glycosylated (N-linked (GlcNAc...) asparagine). Residues 1095 to 1115 are compositionally biased toward polar residues; sequence HSWQTDPLSSSPTWPASTGSP. Residues 1095 to 1119 are disordered; the sequence is HSWQTDPLSSSPTWPASTGSPTGEP. A lipid anchor (GPI-anchor amidated glycine) is attached at Gly-1113. Residues 1114 to 1137 constitute a propeptide, removed in mature form; that stretch reads SPTGEPASQALWLGCTLLLLTAKS.

This sequence belongs to the stereocilin family. As to expression, expressed in the inner ear and vestibule.

It localises to the apical cell membrane. The protein localises to the secreted. Its subcellular location is the extracellular space. The protein resides in the extracellular matrix. Its function is as follows. May act as an adhesion molecule. This Mus musculus (Mouse) protein is Otoancorin (Otoa).